Reading from the N-terminus, the 263-residue chain is Pheophorbidase (263 aa).

The region spanning 13 to 244 is the AB hydrolase-1 domain; the sequence is HFVFVHGASH…LEESDHSAFF (232 aa). The Acyl-ester intermediate role is filled by S88. Catalysis depends on charge relay system residues D212 and H240.

Belongs to the AB hydrolase superfamily. In terms of assembly, homodimer.

The protein resides in the cytoplasm. It carries out the reaction pheophorbide a + H2O + H(+) = pyropheophorbide a + methanol + CO2. Its activity is regulated as follows. Inhibited by methanol and phenylmethylsulfonicfluoride (PMSF). Involved in chlorophyll degradation. Specific for the pheophorbides of the dihydroporphyrin and tetrahydroporphyrin types. Chlorophyllide a, pheophytin a and the nonfluorescent chlorophyll catabolite (NCC) are not used as substrates. The polypeptide is Pheophorbidase (PPD) (Raphanus sativus (Radish)).